The primary structure comprises 368 residues: Cobalt-precorrin-5B C(1)-methyltransferase (368 aa).

It belongs to the CbiD family.

It carries out the reaction Co-precorrin-5B + S-adenosyl-L-methionine = Co-precorrin-6A + S-adenosyl-L-homocysteine. It functions in the pathway cofactor biosynthesis; adenosylcobalamin biosynthesis; cob(II)yrinate a,c-diamide from sirohydrochlorin (anaerobic route): step 6/10. Its function is as follows. Catalyzes the methylation of C-1 in cobalt-precorrin-5B to form cobalt-precorrin-6A. The chain is Cobalt-precorrin-5B C(1)-methyltransferase from Synechococcus sp. (strain CC9605).